The following is a 173-amino-acid chain: Ribosome maturation factor RimP (173 aa).

This sequence belongs to the RimP family.

Its subcellular location is the cytoplasm. Its function is as follows. Required for maturation of 30S ribosomal subunits. The sequence is that of Ribosome maturation factor RimP from Pelodictyon phaeoclathratiforme (strain DSM 5477 / BU-1).